We begin with the raw amino-acid sequence, 471 residues long: Siroheme synthase (471 aa).

Positions 1–203 (MEYLPLFADL…GRLEQAEQAL (203 aa)) are precorrin-2 dehydrogenase /sirohydrochlorin ferrochelatase. NAD(+)-binding positions include 22–23 (EV) and 43–44 (RA). Ser128 is modified (phosphoserine). A uroporphyrinogen-III C-methyltransferase region spans residues 215 to 471 (GEVALVGAGP…QKRASVVNLA (257 aa)). Residue Pro224 coordinates S-adenosyl-L-methionine. Asp247 serves as the catalytic Proton acceptor. Lys269 (proton donor) is an active-site residue. Residues 300 to 302 (GGD), Ile305, 330 to 331 (TA), Met382, and Gly411 each bind S-adenosyl-L-methionine.

It in the N-terminal section; belongs to the precorrin-2 dehydrogenase / sirohydrochlorin ferrochelatase family. This sequence in the C-terminal section; belongs to the precorrin methyltransferase family.

The enzyme catalyses uroporphyrinogen III + 2 S-adenosyl-L-methionine = precorrin-2 + 2 S-adenosyl-L-homocysteine + H(+). It catalyses the reaction precorrin-2 + NAD(+) = sirohydrochlorin + NADH + 2 H(+). The catalysed reaction is siroheme + 2 H(+) = sirohydrochlorin + Fe(2+). The protein operates within cofactor biosynthesis; adenosylcobalamin biosynthesis; precorrin-2 from uroporphyrinogen III: step 1/1. Its pathway is cofactor biosynthesis; adenosylcobalamin biosynthesis; sirohydrochlorin from precorrin-2: step 1/1. It participates in porphyrin-containing compound metabolism; siroheme biosynthesis; precorrin-2 from uroporphyrinogen III: step 1/1. It functions in the pathway porphyrin-containing compound metabolism; siroheme biosynthesis; siroheme from sirohydrochlorin: step 1/1. The protein operates within porphyrin-containing compound metabolism; siroheme biosynthesis; sirohydrochlorin from precorrin-2: step 1/1. Functionally, multifunctional enzyme that catalyzes the SAM-dependent methylations of uroporphyrinogen III at position C-2 and C-7 to form precorrin-2 via precorrin-1. Then it catalyzes the NAD-dependent ring dehydrogenation of precorrin-2 to yield sirohydrochlorin. Finally, it catalyzes the ferrochelation of sirohydrochlorin to yield siroheme. The sequence is that of Siroheme synthase from Sodalis glossinidius (strain morsitans).